Consider the following 247-residue polypeptide: NAD-dependent protein deacetylase (247 aa).

A Deacetylase sirtuin-type domain is found at 1 to 247; the sequence is METFKSILHE…EFARSLGMKK (247 aa). NAD(+) is bound by residues Ala-20, Thr-24, Phe-31, Arg-32, Gln-100, Ile-102, Asp-103, and His-118. Residue Phe-31 coordinates nicotinamide. Nicotinamide is bound by residues Ile-102 and Asp-103. His-118 acts as the Proton acceptor in catalysis. The Zn(2+) site is built by Cys-126, Cys-129, Cys-146, and Cys-156. Thr-192, Ser-193, Asn-218, and Ile-236 together coordinate NAD(+).

Belongs to the sirtuin family. Class U subfamily. Zn(2+) serves as cofactor.

Its subcellular location is the cytoplasm. It carries out the reaction N(6)-acetyl-L-lysyl-[protein] + NAD(+) + H2O = 2''-O-acetyl-ADP-D-ribose + nicotinamide + L-lysyl-[protein]. In terms of biological role, NAD-dependent protein deacetylase which modulates the activities of several enzymes which are inactive in their acetylated form. The chain is NAD-dependent protein deacetylase from Bacillus subtilis (strain 168).